The chain runs to 369 residues: Zeaxanthin 7,8(7',8')-cleavage dioxygenase, chromoplastic (369 aa).

4 residues coordinate Fe cation: histidine 62, histidine 112, histidine 177, and histidine 356.

The protein belongs to the carotenoid oxygenase family. Fe(2+) serves as cofactor. In the style branches.

Its subcellular location is the plastid. The protein resides in the chromoplast. It carries out the reaction all-trans-zeaxanthin + 2 O2 = crocetin dialdehyde + 2 3beta-hydroxy-beta-cyclocitral. In terms of biological role, cleaves zeaxanthin symmetrically at the 7-8 and 7'-8' double bonds to produce crocetin dialdehyde and hydroxy-beta-cyclocitral, two water-soluble precursors sequestred in vacuoles and involved in the synthesis of saffron pigment and aroma. This Crocus sativus (Saffron) protein is Zeaxanthin 7,8(7',8')-cleavage dioxygenase, chromoplastic (ZCD).